A 196-amino-acid chain; its full sequence is tRNA(Phe) 7-((3-amino-3-carboxypropyl)-4-demethylwyosine(37)-N(4))-methyltransferase 1 (196 aa).

It belongs to the TYW3 family.

It carries out the reaction 4-demethyl-7-[(3S)-3-amino-3-carboxypropyl]wyosine(37) in tRNA(Phe) + S-adenosyl-L-methionine = 7-[(3S)-3-amino-3-carboxypropyl]wyosine(37) in tRNA(Phe) + S-adenosyl-L-homocysteine + H(+). S-adenosyl-L-methionine-dependent methyltransferase that acts as a component of the wyosine derivatives biosynthesis pathway. Probably methylates N-4 position of wybutosine-86 to produce wybutosine-72. The protein is tRNA(Phe) 7-((3-amino-3-carboxypropyl)-4-demethylwyosine(37)-N(4))-methyltransferase 1 of Pyrococcus horikoshii (strain ATCC 700860 / DSM 12428 / JCM 9974 / NBRC 100139 / OT-3).